The sequence spans 383 residues: Lipid-A-disaccharide synthase (383 aa).

It belongs to the LpxB family.

The catalysed reaction is a lipid X + a UDP-2-N,3-O-bis[(3R)-3-hydroxyacyl]-alpha-D-glucosamine = a lipid A disaccharide + UDP + H(+). The protein operates within bacterial outer membrane biogenesis; LPS lipid A biosynthesis. Condensation of UDP-2,3-diacylglucosamine and 2,3-diacylglucosamine-1-phosphate to form lipid A disaccharide, a precursor of lipid A, a phosphorylated glycolipid that anchors the lipopolysaccharide to the outer membrane of the cell. In Trichlorobacter lovleyi (strain ATCC BAA-1151 / DSM 17278 / SZ) (Geobacter lovleyi), this protein is Lipid-A-disaccharide synthase.